A 199-amino-acid polypeptide reads, in one-letter code: MKQLVLASGNAGKLGELRAMLAGVALQITAQSEFGVQDVPETGLTFIENALIKARHACLMTGFPALADDSGLIVDALGGAPGLYSARYAGTPTDAAANNAKLLEMLRDVPVGRRSARFYAVIVLLRHAEDPQPLIADGCWEGEIVFEPCGSGGFGYNPIFFDPLYGMTAAQMGAELKNKISHRARALEQLRDCLHTFMA.

8-13 (SGNAGK) provides a ligand contact to substrate. Residue Asp-69 is the Proton acceptor of the active site. Asp-69 contacts Mg(2+). Substrate contacts are provided by residues Ser-70, 154 to 157 (FGYN), Lys-177, and 182 to 183 (HR).

It belongs to the HAM1 NTPase family. As to quaternary structure, homodimer. It depends on Mg(2+) as a cofactor.

It carries out the reaction XTP + H2O = XMP + diphosphate + H(+). The enzyme catalyses dITP + H2O = dIMP + diphosphate + H(+). It catalyses the reaction ITP + H2O = IMP + diphosphate + H(+). Its function is as follows. Pyrophosphatase that catalyzes the hydrolysis of nucleoside triphosphates to their monophosphate derivatives, with a high preference for the non-canonical purine nucleotides XTP (xanthosine triphosphate), dITP (deoxyinosine triphosphate) and ITP. Seems to function as a house-cleaning enzyme that removes non-canonical purine nucleotides from the nucleotide pool, thus preventing their incorporation into DNA/RNA and avoiding chromosomal lesions. This Xylella fastidiosa (strain 9a5c) protein is dITP/XTP pyrophosphatase.